The following is a 252-amino-acid chain: uncharacterized protein (252 aa).

Belongs to the LarE family.

This is an uncharacterized protein from Methanocaldococcus jannaschii (strain ATCC 43067 / DSM 2661 / JAL-1 / JCM 10045 / NBRC 100440) (Methanococcus jannaschii).